The sequence spans 235 residues: Pyridoxine 5'-phosphate synthase (235 aa).

N6 is a binding site for 3-amino-2-oxopropyl phosphate. Residue 8–9 (DH) participates in 1-deoxy-D-xylulose 5-phosphate binding. R17 provides a ligand contact to 3-amino-2-oxopropyl phosphate. H42 (proton acceptor) is an active-site residue. 2 residues coordinate 1-deoxy-D-xylulose 5-phosphate: R44 and H49. E69 acts as the Proton acceptor in catalysis. Residue T99 coordinates 1-deoxy-D-xylulose 5-phosphate. The Proton donor role is filled by H188. Residues G189 and 210–211 (GH) each bind 3-amino-2-oxopropyl phosphate.

Belongs to the PNP synthase family. In terms of assembly, homooctamer; tetramer of dimers.

Its subcellular location is the cytoplasm. It catalyses the reaction 3-amino-2-oxopropyl phosphate + 1-deoxy-D-xylulose 5-phosphate = pyridoxine 5'-phosphate + phosphate + 2 H2O + H(+). It functions in the pathway cofactor biosynthesis; pyridoxine 5'-phosphate biosynthesis; pyridoxine 5'-phosphate from D-erythrose 4-phosphate: step 5/5. Its function is as follows. Catalyzes the complicated ring closure reaction between the two acyclic compounds 1-deoxy-D-xylulose-5-phosphate (DXP) and 3-amino-2-oxopropyl phosphate (1-amino-acetone-3-phosphate or AAP) to form pyridoxine 5'-phosphate (PNP) and inorganic phosphate. The chain is Pyridoxine 5'-phosphate synthase from Wolbachia sp. subsp. Drosophila simulans (strain wRi).